Reading from the N-terminus, the 519-residue chain is Ribonuclease Y (519 aa).

Residues Val6–Ala26 form a helical membrane-spanning segment. Residues Thr209 to Leu272 enclose the KH domain. The region spanning Val335 to Ser428 is the HD domain.

This sequence belongs to the RNase Y family.

The protein localises to the cell membrane. Functionally, endoribonuclease that initiates mRNA decay. The protein is Ribonuclease Y of Protochlamydia amoebophila (strain UWE25).